A 212-amino-acid chain; its full sequence is ER lumen protein-retaining receptor 2 (212 aa).

Residues 1–4 (MNIF) lie on the Lumenal side of the membrane. A helical transmembrane segment spans residues 5–24 (RLTGDLSHLAAIIILLLKIW). The Cytoplasmic segment spans residues 25-32 (KSRSCAGI). A helical membrane pass occupies residues 33-52 (SGKSQLLFALVFTTRYLDLF). The interaction with the K-D-E-L motif on target proteins stretch occupies residues 47-48 (RY). The Lumenal portion of the chain corresponds to 53–58 (TSFISL). Residues 59 to 79 (YNTSMKLIYIACSYATVYLIY) traverse the membrane as a helical segment. Over 80-92 (MKFKATYDGNHDT) the chain is Cytoplasmic. The chain crosses the membrane as a helical span at residues 93–110 (FRVEFLIVPVGGLSFLVN). Over 111–116 (HDFSPL) the chain is Lumenal. A helical transmembrane segment spans residues 117 to 135 (EILWTFSIYLESVAILPQL). The Cytoplasmic portion of the chain corresponds to 136-149 (FMISKTGEAETITT). The chain crosses the membrane as a helical span at residues 150–168 (HYLFFLGLYRALYLVNWIW). Positions 159 to 169 (RALYLVNWIWR) are interaction with the K-D-E-L motif on target proteins. Residues 169–178 (RYYFEGFFDL) are Lumenal-facing. A helical transmembrane segment spans residues 179–199 (IAVVAGVVQTVLYCDFFYLYV). The Cytoplasmic segment spans residues 200 to 212 (TKVLKGKKLSLPA). An important for recycling of cargo proteins with the sequence motif K-D-E-L from the Golgi to the endoplasmic reticulum region spans residues 204–207 (KGKK).

Belongs to the ERD2 family.

Its subcellular location is the endoplasmic reticulum membrane. It localises to the golgi apparatus membrane. The protein resides in the cytoplasmic vesicle. It is found in the COPI-coated vesicle membrane. Functionally, membrane receptor that binds the K-D-E-L sequence motif in the C-terminal part of endoplasmic reticulum resident proteins and maintains their localization in that compartment by participating to their vesicle-mediated recycling back from the Golgi. Binding is pH dependent, and is optimal at pH 5-5.4. The protein is ER lumen protein-retaining receptor 2 (KDELR2) of Gallus gallus (Chicken).